The primary structure comprises 137 residues: Urease subunit beta (137 aa).

Residues 118–137 (IIAEENKVSENANKESGYNR) are disordered. Polar residues predominate over residues 126–137 (SENANKESGYNR).

The protein belongs to the urease beta subunit family. In terms of assembly, heterotrimer of UreA (gamma), UreB (beta) and UreC (alpha) subunits. Three heterotrimers associate to form the active enzyme.

It localises to the cytoplasm. The catalysed reaction is urea + 2 H2O + H(+) = hydrogencarbonate + 2 NH4(+). The protein operates within nitrogen metabolism; urea degradation; CO(2) and NH(3) from urea (urease route): step 1/1. This chain is Urease subunit beta, found in Staphylococcus xylosus.